Consider the following 334-residue polypeptide: Procathepsin L (334 aa).

The signal sequence occupies residues 1–17; it reads MNLLLLLAVLCLGTALA. The propeptide at 18-113 is activation peptide; sequence TPKFDQTFSA…RLFQEPLMLK (96 aa). E122 lines the Zn(2+) pocket. Cystine bridges form between C135-C178 and C169-C211. The active site involves C138. Zn(2+)-binding residues include E163, D184, E199, and E205. A glycan (N-linked (GlcNAc...) (high mannose) asparagine) is linked at N221. D227, D250, H253, and D275 together coordinate Zn(2+). C269 and C322 form a disulfide bridge. Residue H276 is part of the active site. Residues 289–290 constitute a propeptide that is removed on maturation; the sequence is DS. N300 is an active-site residue.

Belongs to the peptidase C1 family. In terms of assembly, dimer of a heavy and a light chain linked by disulfide bonds. Interacts with Long isoform of CD74/Ii chain; the interaction stabilizes the conformation of mature CTSL. In terms of processing, during export along the endocytic pathway, pro-CTSL undergoes several proteolytic cleavages to generate the CTSL single-chain and two-chain mature forms, composed of a heavy chain linked to a light chain by disulfide bonds. Autocleavage; produces the single-chain CTSL after cleavage of the propeptide. The cleavage can be intermolecular. Expressed in thymus, kidney and liver. Expressed in thyroid epithelial cells. Expressed in cortical thymic epithelial cells. Expressed by antigen presenting cells (APCs) such as dendritic cells and macrophages.

The protein localises to the lysosome. Its subcellular location is the apical cell membrane. It localises to the secreted. It is found in the extracellular space. The protein resides in the cytoplasmic vesicle. The protein localises to the secretory vesicle. Its subcellular location is the chromaffin granule. It carries out the reaction Specificity close to that of papain. As compared to cathepsin B, cathepsin L exhibits higher activity toward protein substrates, but has little activity on Z-Arg-Arg-NHMec, and no peptidyl-dipeptidase activity.. Long isoform of CD74/Ii chain stabilizes the conformation of mature CTSL by binding to its active site and serving as a chaperone to help maintain a pool of mature enzyme in endocytic compartments and extracellular space of APCs. IFNG enhances the conversion into the CTSL mature and active form. Inhibited by CST6. Inhibited by the glycopeptide antibiotic teicoplanin. Inhibited by amantadine. In terms of biological role, thiol protease important for the overall degradation of proteins in lysosomes. Involved in the solubilization of cross-linked TG/thyroglobulin and in the subsequent release of thyroid hormone thyroxine (T4) by limited proteolysis of TG/thyroglobulin in the thyroid follicle lumen. In neuroendocrine chromaffin cells secretory vesicles, catalyzes the prohormone proenkephalin processing to the active enkephalin peptide neurotransmitter. In thymus, regulates CD4(+) T cell positive selection by generating the major histocompatibility complex class II (MHCII) bound peptide ligands presented by cortical thymic epithelial cells. Also mediates invariant chain processing in cortical thymic epithelial cells. Major elastin-degrading enzyme at neutral pH. Accumulates as a mature and active enzyme in the extracellular space of antigen presenting cells (APCs) to regulate degradation of the extracellular matrix in the course of inflammation. Secreted form generates endostatin from COL18A1. Critical for cardiac morphology and function. Plays an important role in hair follicle morphogenesis and cycling, as well as epidermal differentiation. Required for maximal stimulation of steroidogenesis by TIMP1. This is Procathepsin L from Mus musculus (Mouse).